The primary structure comprises 197 residues: dTTP/UTP pyrophosphatase (197 aa).

Asp70 acts as the Proton acceptor in catalysis.

It belongs to the Maf family. YhdE subfamily. It depends on a divalent metal cation as a cofactor.

The protein localises to the cytoplasm. The enzyme catalyses dTTP + H2O = dTMP + diphosphate + H(+). It catalyses the reaction UTP + H2O = UMP + diphosphate + H(+). Its function is as follows. Nucleoside triphosphate pyrophosphatase that hydrolyzes dTTP and UTP. May have a dual role in cell division arrest and in preventing the incorporation of modified nucleotides into cellular nucleic acids. This chain is dTTP/UTP pyrophosphatase (yceF), found in Shigella dysenteriae serotype 1 (strain Sd197).